The sequence spans 270 residues: Glutamate racemase (270 aa).

Substrate-binding positions include 13 to 14 and 45 to 46; these read DS and YG. Cys-77 serves as the catalytic Proton donor/acceptor. Position 78–79 (78–79) interacts with substrate; sequence NT. Cys-185 serves as the catalytic Proton donor/acceptor. A substrate-binding site is contributed by 186 to 187; sequence TH.

This sequence belongs to the aspartate/glutamate racemases family.

The enzyme catalyses L-glutamate = D-glutamate. The protein operates within cell wall biogenesis; peptidoglycan biosynthesis. Functionally, provides the (R)-glutamate required for cell wall biosynthesis. This chain is Glutamate racemase, found in Vibrio parahaemolyticus serotype O3:K6 (strain RIMD 2210633).